We begin with the raw amino-acid sequence, 352 residues long: Phosphate acyltransferase (352 aa).

This sequence belongs to the PlsX family. Homodimer. Probably interacts with PlsY.

The protein resides in the cytoplasm. It carries out the reaction a fatty acyl-[ACP] + phosphate = an acyl phosphate + holo-[ACP]. Its pathway is lipid metabolism; phospholipid metabolism. Catalyzes the reversible formation of acyl-phosphate (acyl-PO(4)) from acyl-[acyl-carrier-protein] (acyl-ACP). This enzyme utilizes acyl-ACP as fatty acyl donor, but not acyl-CoA. This Bordetella bronchiseptica (strain ATCC BAA-588 / NCTC 13252 / RB50) (Alcaligenes bronchisepticus) protein is Phosphate acyltransferase.